The primary structure comprises 92 residues: Putative pterin-4-alpha-carbinolamine dehydratase (92 aa).

Belongs to the pterin-4-alpha-carbinolamine dehydratase family.

The enzyme catalyses (4aS,6R)-4a-hydroxy-L-erythro-5,6,7,8-tetrahydrobiopterin = (6R)-L-erythro-6,7-dihydrobiopterin + H2O. The sequence is that of Putative pterin-4-alpha-carbinolamine dehydratase from Natronomonas pharaonis (strain ATCC 35678 / DSM 2160 / CIP 103997 / JCM 8858 / NBRC 14720 / NCIMB 2260 / Gabara) (Halobacterium pharaonis).